The primary structure comprises 50 residues: Insulin (50 aa).

3 cysteine pairs are disulfide-bonded: Cys-7-Cys-36, Cys-19-Cys-49, and Cys-35-Cys-40.

Belongs to the insulin family. In terms of assembly, heterodimer of a B chain and an A chain linked by two disulfide bonds.

The protein localises to the secreted. Its function is as follows. Insulin decreases blood glucose concentration. It increases cell permeability to monosaccharides, amino acids and fatty acids. It accelerates glycolysis, the pentose phosphate cycle, and glycogen synthesis in liver. This chain is Insulin (ins), found in Katsuwonus pelamis (Skipjack tuna).